Here is a 411-residue protein sequence, read N- to C-terminus: KIN17-like protein (411 aa).

The segment at 28 to 50 adopts a C2H2-type zinc-finger fold; it reads CQMCQKQCRDENGFKCHCMSESH. Residues 51-160 are winged helix-turn-helix (wHTH); the sequence is QRQMQVFGQN…KERLKNKRVK (110 aa). The stretch at 147–183 forms a coiled coil; it reads ETLFKERLKNKRVKSDLAEEEKQEREIQRQIERAAEK. Disordered regions lie at residues 182 to 211 and 232 to 286; these read EKLN…KKDE and VATG…EEEK. A compositionally biased stretch (basic and acidic residues) spans 253 to 286; that stretch reads KVERGEKRKRSGDSGRSEKERRSALDELMKEEEK. The Nuclear localization signal (NLS) signature appears at 259 to 262; the sequence is KRKR. Residues 265–294 are a coiled coil; it reads DSGRSEKERRSALDELMKEEEKKKERMNRK. The tract at residues 301–352 is C-terminal subdomain A; the sequence is GIIVKVMSKALAEKGYYKQKGVVKKVIDNYVGEIKMLDSKHVLRVDQKELET. Residues 358–409 form a C-terminal subdomain B region; the sequence is GGMVKIVNGAYRGSNARLLGVDTEKFCAKVQIEKGVYDGRVIKSIEYEDICK.

The protein belongs to the KIN17 family. Interacts with SPL7. In terms of tissue distribution, expressed in root vasculature, lateral roots, cotyledons, rosette leaves, cauline leaves, stems, sepals, style of pistils, mature pollen grains and siliques.

The protein localises to the nucleus speckle. In terms of biological role, promotes the copper deficiency response by direct interaction with SPL7. Acts with SPL7 in a common pathway to promote copper-responsive genes and alleviate oxidative stress during copper-limiting periods. May promote SPL7 function when copper is limiting. Participates in the control of general plant growth and development, and in the response to counteract the negative effects of UV radiation. The polypeptide is KIN17-like protein (Arabidopsis thaliana (Mouse-ear cress)).